The primary structure comprises 87 residues: Small ribosomal subunit protein uS17 (87 aa).

This sequence belongs to the universal ribosomal protein uS17 family. In terms of assembly, part of the 30S ribosomal subunit.

One of the primary rRNA binding proteins, it binds specifically to the 5'-end of 16S ribosomal RNA. The protein is Small ribosomal subunit protein uS17 of Dichelobacter nodosus (strain VCS1703A).